A 434-amino-acid polypeptide reads, in one-letter code: Enolase (434 aa).

(2R)-2-phosphoglycerate is bound at residue Gln163. The active-site Proton donor is Glu205. Mg(2+) contacts are provided by Asp242, Glu291, and Asp318. (2R)-2-phosphoglycerate is bound by residues Lys343, Arg372, Ser373, and Lys394. Catalysis depends on Lys343, which acts as the Proton acceptor.

Belongs to the enolase family. It depends on Mg(2+) as a cofactor.

The protein localises to the cytoplasm. It is found in the secreted. The protein resides in the cell surface. The enzyme catalyses (2R)-2-phosphoglycerate = phosphoenolpyruvate + H2O. The protein operates within carbohydrate degradation; glycolysis; pyruvate from D-glyceraldehyde 3-phosphate: step 4/5. Functionally, catalyzes the reversible conversion of 2-phosphoglycerate (2-PG) into phosphoenolpyruvate (PEP). It is essential for the degradation of carbohydrates via glycolysis. The protein is Enolase of Streptococcus gordonii (strain Challis / ATCC 35105 / BCRC 15272 / CH1 / DL1 / V288).